A 276-amino-acid chain; its full sequence is Large ribosomal subunit protein uL2 (276 aa).

Disordered stretches follow at residues Met-1 to Asp-20 and Thr-219 to Lys-276. The segment covering Asn-7–Asp-20 has biased composition (polar residues).

The protein belongs to the universal ribosomal protein uL2 family. In terms of assembly, part of the 50S ribosomal subunit. Forms a bridge to the 30S subunit in the 70S ribosome.

In terms of biological role, one of the primary rRNA binding proteins. Required for association of the 30S and 50S subunits to form the 70S ribosome, for tRNA binding and peptide bond formation. It has been suggested to have peptidyltransferase activity; this is somewhat controversial. Makes several contacts with the 16S rRNA in the 70S ribosome. In Bacillus cereus (strain Q1), this protein is Large ribosomal subunit protein uL2.